The chain runs to 327 residues: Annexin A8 (327 aa).

4 Annexin repeats span residues Phe21–Tyr92, Pro93–Gln164, Gly177–Lys249, and Asn253–Gly324. Positions 266, 268, 270, and 310 each coordinate Ca(2+).

Belongs to the annexin family.

This protein is an anticoagulant protein that acts as an indirect inhibitor of the thromboplastin-specific complex, which is involved in the blood coagulation cascade. This chain is Annexin A8, found in Homo sapiens (Human).